Reading from the N-terminus, the 617-residue chain is COMPASS component cclA (617 aa).

Low complexity-rich tracts occupy residues 1 to 19 and 40 to 50; these read MASI…INSP and SSPAPASNASA. The tract at residues 1-89 is disordered; it reads MASIQPAGSS…AKKRATAVQN (89 aa). Residues 57–69 show a composition bias toward basic residues; sequence SKRNKRDSRKKRE. One can recognise a B30.2/SPRY domain in the interval 157-380; sequence IADTSFPHIK…YAFNLKETPT (224 aa). Positions 595-617 are disordered; it reads TPNTEEPAARPENITVGHDVEMS.

Belongs to the cclA family. As to quaternary structure, component of the COMPASS complex.

It localises to the nucleus. The protein localises to the chromosome. The protein resides in the telomere. Component of the COMPASS (Set1C) complex that specifically mono-, di- and trimethylates histone H3 to form H3K4me1/2/3, which subsequently plays a role in telomere length maintenance and transcription elongation regulation. Controls the production of several secondary metabolites, including astellolides. The polypeptide is COMPASS component cclA (Aspergillus oryzae (strain ATCC 42149 / RIB 40) (Yellow koji mold)).